A 290-amino-acid chain; its full sequence is Probable branched-chain-amino-acid aminotransferase (290 aa).

Lysine 155 is subject to N6-(pyridoxal phosphate)lysine.

This sequence belongs to the class-IV pyridoxal-phosphate-dependent aminotransferase family. It depends on pyridoxal 5'-phosphate as a cofactor.

It catalyses the reaction L-leucine + 2-oxoglutarate = 4-methyl-2-oxopentanoate + L-glutamate. The enzyme catalyses L-isoleucine + 2-oxoglutarate = (S)-3-methyl-2-oxopentanoate + L-glutamate. The catalysed reaction is L-valine + 2-oxoglutarate = 3-methyl-2-oxobutanoate + L-glutamate. It participates in amino-acid biosynthesis; L-isoleucine biosynthesis; L-isoleucine from 2-oxobutanoate: step 4/4. It functions in the pathway amino-acid biosynthesis; L-leucine biosynthesis; L-leucine from 3-methyl-2-oxobutanoate: step 4/4. Its pathway is amino-acid biosynthesis; L-valine biosynthesis; L-valine from pyruvate: step 4/4. Acts on leucine, isoleucine and valine. This is Probable branched-chain-amino-acid aminotransferase (ilvE) from Rickettsia conorii (strain ATCC VR-613 / Malish 7).